The following is a 410-amino-acid chain: Serine hydroxymethyltransferase (410 aa).

Residues Leu-116 and 120-122 (GHL) each bind (6S)-5,6,7,8-tetrahydrofolate. Lys-225 carries the post-translational modification N6-(pyridoxal phosphate)lysine. 349 to 351 (SPF) contacts (6S)-5,6,7,8-tetrahydrofolate.

This sequence belongs to the SHMT family. In terms of assembly, homodimer. It depends on pyridoxal 5'-phosphate as a cofactor.

Its subcellular location is the cytoplasm. It carries out the reaction (6R)-5,10-methylene-5,6,7,8-tetrahydrofolate + glycine + H2O = (6S)-5,6,7,8-tetrahydrofolate + L-serine. The protein operates within one-carbon metabolism; tetrahydrofolate interconversion. Its pathway is amino-acid biosynthesis; glycine biosynthesis; glycine from L-serine: step 1/1. Catalyzes the reversible interconversion of serine and glycine with tetrahydrofolate (THF) serving as the one-carbon carrier. This reaction serves as the major source of one-carbon groups required for the biosynthesis of purines, thymidylate, methionine, and other important biomolecules. Also exhibits THF-independent aldolase activity toward beta-hydroxyamino acids, producing glycine and aldehydes, via a retro-aldol mechanism. The sequence is that of Serine hydroxymethyltransferase from Leuconostoc mesenteroides subsp. mesenteroides (strain ATCC 8293 / DSM 20343 / BCRC 11652 / CCM 1803 / JCM 6124 / NCDO 523 / NBRC 100496 / NCIMB 8023 / NCTC 12954 / NRRL B-1118 / 37Y).